Reading from the N-terminus, the 346-residue chain is MTRVISGEPQHGDLAPADRALRPQTLAEFVGQEQAKGNLRVFIEAAKGRGEALDHVLLFGPPGLGKTTLAQIVARELGVNFRATSGPVLNKPGDLAAILTNLEANDVLFIDEIHRLSSNVEEILYPAMEDHVLDLVIGEGPSARSIRIDLAPFTLVAATTRAGMLATPLRDRFGIPIRLEFYTPAELRHVLQHAARKMGAPLTDDGADEIAKRARGTPRVAGRLLRRVRDFATADGADRIDRKAAAMALARLEVDESGLDSLDRRYLRAMIENYGGGPVGVETIAYAIAEARDAVEDVIEPYLMQQGFIQRTPRGRMACGKAYLHLGLTPPAAPPGQAQGALFDEG.

The interval 1 to 182 (MTRVISGEPQ…FGIPIRLEFY (182 aa)) is large ATPase domain (RuvB-L). The ATP site is built by Leu21, Arg22, Gly63, Lys66, Thr67, Thr68, Arg172, Tyr182, and Arg219. Thr67 serves as a coordination point for Mg(2+). The segment at 183–253 (TPAELRHVLQ…AAAMALARLE (71 aa)) is small ATPAse domain (RuvB-S). The head domain (RuvB-H) stretch occupies residues 256-346 (ESGLDSLDRR…QAQGALFDEG (91 aa)). Positions 292, 311, and 316 each coordinate DNA.

This sequence belongs to the RuvB family. In terms of assembly, homohexamer. Forms an RuvA(8)-RuvB(12)-Holliday junction (HJ) complex. HJ DNA is sandwiched between 2 RuvA tetramers; dsDNA enters through RuvA and exits via RuvB. An RuvB hexamer assembles on each DNA strand where it exits the tetramer. Each RuvB hexamer is contacted by two RuvA subunits (via domain III) on 2 adjacent RuvB subunits; this complex drives branch migration. In the full resolvosome a probable DNA-RuvA(4)-RuvB(12)-RuvC(2) complex forms which resolves the HJ.

The protein resides in the cytoplasm. The catalysed reaction is ATP + H2O = ADP + phosphate + H(+). In terms of biological role, the RuvA-RuvB-RuvC complex processes Holliday junction (HJ) DNA during genetic recombination and DNA repair, while the RuvA-RuvB complex plays an important role in the rescue of blocked DNA replication forks via replication fork reversal (RFR). RuvA specifically binds to HJ cruciform DNA, conferring on it an open structure. The RuvB hexamer acts as an ATP-dependent pump, pulling dsDNA into and through the RuvAB complex. RuvB forms 2 homohexamers on either side of HJ DNA bound by 1 or 2 RuvA tetramers; 4 subunits per hexamer contact DNA at a time. Coordinated motions by a converter formed by DNA-disengaged RuvB subunits stimulates ATP hydrolysis and nucleotide exchange. Immobilization of the converter enables RuvB to convert the ATP-contained energy into a lever motion, pulling 2 nucleotides of DNA out of the RuvA tetramer per ATP hydrolyzed, thus driving DNA branch migration. The RuvB motors rotate together with the DNA substrate, which together with the progressing nucleotide cycle form the mechanistic basis for DNA recombination by continuous HJ branch migration. Branch migration allows RuvC to scan DNA until it finds its consensus sequence, where it cleaves and resolves cruciform DNA. This is Holliday junction branch migration complex subunit RuvB from Caulobacter vibrioides (strain ATCC 19089 / CIP 103742 / CB 15) (Caulobacter crescentus).